The chain runs to 141 residues: MAIERTLSIIKPDAVAKNVIGQIYSRFENAGLKIVASRMVHLSRADAEKFYAVHAARPFFKDLVDFMISGPVVVQALEGENAILKHRDLMGATDPKKAEKGTIRADFADSIDANAVHGSDAAETAAVEIAFFFPQVNVYSR.

Residues Lys11, Phe59, Arg87, Thr93, Arg104, and Asn114 each coordinate ATP. Catalysis depends on His117, which acts as the Pros-phosphohistidine intermediate.

This sequence belongs to the NDK family. Homotetramer. It depends on Mg(2+) as a cofactor.

It is found in the cytoplasm. It catalyses the reaction a 2'-deoxyribonucleoside 5'-diphosphate + ATP = a 2'-deoxyribonucleoside 5'-triphosphate + ADP. The enzyme catalyses a ribonucleoside 5'-diphosphate + ATP = a ribonucleoside 5'-triphosphate + ADP. Its function is as follows. Major role in the synthesis of nucleoside triphosphates other than ATP. The ATP gamma phosphate is transferred to the NDP beta phosphate via a ping-pong mechanism, using a phosphorylated active-site intermediate. The sequence is that of Nucleoside diphosphate kinase from Paraburkholderia phytofirmans (strain DSM 17436 / LMG 22146 / PsJN) (Burkholderia phytofirmans).